A 351-amino-acid polypeptide reads, in one-letter code: UDP-N-acetylglucosamine transporter slc35b4 (351 aa).

The next 10 membrane-spanning stretches (helical) occupy residues 6 to 26 (LISL…VISL), 37 to 57 (AILV…FVNI), 77 to 97 (IPLK…VLNN), 104 to 124 (IPIP…IVIG), 136 to 156 (QILS…SSMP), 173 to 193 (FSIG…LGLI), 209 to 229 (TIFY…DDIL), 252 to 274 (TLWV…VFIL), 282 to 302 (TCTL…VIYF), and 306 to 326 (FTSL…MYST).

The protein belongs to the nucleotide-sugar transporter family. SLC35B subfamily.

It localises to the golgi apparatus membrane. Sugar transporter that specifically mediates the transport of UDP-N-acetylglucosamine (UDP-GlcNAc) from cytosol into Golgi. This is UDP-N-acetylglucosamine transporter slc35b4 (slc35b4) from Dictyostelium discoideum (Social amoeba).